The primary structure comprises 271 residues: Transmembrane protein 33 homolog (271 aa).

Residues 1–32 (MVEIVEEPDDHQSSSTGAGSSGSSSAPPPPPP) are disordered. The segment covering 13 to 25 (SSSTGAGSSGSSS) has biased composition (low complexity). 3 consecutive transmembrane segments (helical) span residues 56–76 (VLTV…VPAH), 125–145 (VVFL…IYAA), and 180–200 (ALGI…SLIF).

The protein belongs to the PER33/POM33 family.

It is found in the membrane. This Caenorhabditis elegans protein is Transmembrane protein 33 homolog.